The chain runs to 56 residues: Large ribosomal subunit protein bL33 (56 aa).

This sequence belongs to the bacterial ribosomal protein bL33 family.

The polypeptide is Large ribosomal subunit protein bL33 (Tropheryma whipplei (strain TW08/27) (Whipple's bacillus)).